A 124-amino-acid chain; its full sequence is Aspartate 1-decarboxylase (124 aa).

S21 functions as the Schiff-base intermediate with substrate; via pyruvic acid in the catalytic mechanism. S21 is modified (pyruvic acid (Ser)). T53 provides a ligand contact to substrate. The active-site Proton donor is Y54. 69 to 71 (GAA) lines the substrate pocket.

The protein belongs to the PanD family. In terms of assembly, heterooctamer of four alpha and four beta subunits. Requires pyruvate as cofactor. Post-translationally, is synthesized initially as an inactive proenzyme, which is activated by self-cleavage at a specific serine bond to produce a beta-subunit with a hydroxyl group at its C-terminus and an alpha-subunit with a pyruvoyl group at its N-terminus.

It is found in the cytoplasm. The catalysed reaction is L-aspartate + H(+) = beta-alanine + CO2. Its pathway is cofactor biosynthesis; (R)-pantothenate biosynthesis; beta-alanine from L-aspartate: step 1/1. Catalyzes the pyruvoyl-dependent decarboxylation of aspartate to produce beta-alanine. In Dehalococcoides mccartyi (strain ATCC BAA-2266 / KCTC 15142 / 195) (Dehalococcoides ethenogenes (strain 195)), this protein is Aspartate 1-decarboxylase.